A 73-amino-acid polypeptide reads, in one-letter code: Translational regulator CsrA (73 aa).

The protein belongs to the CsrA/RsmA family. As to quaternary structure, homodimer; the beta-strands of each monomer intercalate to form a hydrophobic core, while the alpha-helices form wings that extend away from the core.

The protein localises to the cytoplasm. Functionally, a translational regulator that binds mRNA to regulate translation initiation and/or mRNA stability. Usually binds in the 5'-UTR at or near the Shine-Dalgarno sequence preventing ribosome-binding, thus repressing translation. Its main target seems to be the major flagellin gene, while its function is anatagonized by FliW. This is Translational regulator CsrA from Clostridium acetobutylicum (strain ATCC 824 / DSM 792 / JCM 1419 / IAM 19013 / LMG 5710 / NBRC 13948 / NRRL B-527 / VKM B-1787 / 2291 / W).